Reading from the N-terminus, the 116-residue chain is NADPH-dependent 7-cyano-7-deazaguanine reductase (116 aa).

Catalysis depends on cysteine 31, which acts as the Thioimide intermediate. Aspartate 38 (proton donor) is an active-site residue. Residues 53 to 55 (VEL) and 72 to 73 (YE) each bind substrate.

Belongs to the GTP cyclohydrolase I family. QueF type 1 subfamily.

The protein localises to the cytoplasm. It carries out the reaction 7-aminomethyl-7-carbaguanine + 2 NADP(+) = 7-cyano-7-deazaguanine + 2 NADPH + 3 H(+). Its pathway is tRNA modification; tRNA-queuosine biosynthesis. Its function is as follows. Catalyzes the NADPH-dependent reduction of 7-cyano-7-deazaguanine (preQ0) to 7-aminomethyl-7-deazaguanine (preQ1). The chain is NADPH-dependent 7-cyano-7-deazaguanine reductase from Chlorobium chlorochromatii (strain CaD3).